The primary structure comprises 252 residues: 3-dehydroquinate dehydratase (252 aa).

3-dehydroquinate contacts are provided by residues S21, 46–48 (EWR), and R82. The active-site Proton donor/acceptor is the H143. Residue K170 is the Schiff-base intermediate with substrate of the active site. The 3-dehydroquinate site is built by R213, S232, and Q236.

Belongs to the type-I 3-dehydroquinase family. As to quaternary structure, homodimer.

It catalyses the reaction 3-dehydroquinate = 3-dehydroshikimate + H2O. The protein operates within metabolic intermediate biosynthesis; chorismate biosynthesis; chorismate from D-erythrose 4-phosphate and phosphoenolpyruvate: step 3/7. Functionally, involved in the third step of the chorismate pathway, which leads to the biosynthesis of aromatic amino acids. Catalyzes the cis-dehydration of 3-dehydroquinate (DHQ) and introduces the first double bond of the aromatic ring to yield 3-dehydroshikimate. The sequence is that of 3-dehydroquinate dehydratase from Escherichia coli O9:H4 (strain HS).